A 338-amino-acid chain; its full sequence is Dodecaprenyl-phosphate galacturonate synthase (338 aa).

The next 2 membrane-spanning stretches (helical) occupy residues 254–274 (FFGSLGLGLGALAMLILLYLG) and 289–309 (MLMVGVVLLLSSVQMITTGIL).

This sequence belongs to the glycosyltransferase 2 family.

Its subcellular location is the cell membrane. The enzyme catalyses di-trans,nona-cis-dodecaprenyl phosphate + UDP-alpha-D-galacturonate = beta-D-galacturonosyl di-trans,nona-cis-dodecaprenyl phosphate + UDP. Its function is as follows. Glycosyltransferase that catalyzes the synthesis of dodecaprenyl-phosphate galacturonate (Dod-P-GalA), likely from UDP-GalA and dodecaprenyl-phosphate. Dod-P-GalA is the lipid donor required for GalA transfer to lipopolysaccharide (LPS) specific residues catalyzed by the GalA transferases RgtA, RgtB, RgtC and RgtD. The chain is Dodecaprenyl-phosphate galacturonate synthase from Rhizobium johnstonii (strain DSM 114642 / LMG 32736 / 3841) (Rhizobium leguminosarum bv. viciae).